Reading from the N-terminus, the 375-residue chain is Ferredoxin--NADP reductase, root-type isozyme, chloroplastic (375 aa).

A chloroplast-targeting transit peptide spans 1–60 (MAHSALSQVSVAVPLQTDSSFRRSTFKATSITFSDRSSWISMPPIDLKAAPSRNQHIVCM). The FAD-binding FR-type domain maps to 91–219 (KEPYTATIVS…TGPSGKIMLL (129 aa)). FAD-binding positions include 151 to 154 (RLYL), 172 to 174 (CVR), tyrosine 178, 193 to 195 (VCS), and threonine 235. Residue arginine 174 participates in NADP(+) binding. NADP(+)-binding positions include threonine 235, 266 to 267 (VA), 296 to 297 (SR), lysine 306, 334 to 335 (GL), and glutamate 373.

The protein belongs to the ferredoxin--NADP reductase type 1 family. FAD is required as a cofactor.

It localises to the plastid. It is found in the chloroplast. It catalyses the reaction 2 reduced [2Fe-2S]-[ferredoxin] + NADP(+) + H(+) = 2 oxidized [2Fe-2S]-[ferredoxin] + NADPH. It functions in the pathway energy metabolism; photosynthesis. Functionally, may play a key role in regulating the relative amounts of cyclic and non-cyclic electron flow to meet the demands of the plant for ATP and reducing power. Is involved in nitrate assimilation. The sequence is that of Ferredoxin--NADP reductase, root-type isozyme, chloroplastic from Nicotiana tabacum (Common tobacco).